The primary structure comprises 151 residues: 3-dehydroquinate dehydratase 1 (151 aa).

Tyr24 functions as the Proton acceptor in the catalytic mechanism. 3 residues coordinate substrate: Asn75, His81, and Asp88. The active-site Proton donor is the His101. Residues 102 to 103 and Arg112 each bind substrate; that span reads IS.

It belongs to the type-II 3-dehydroquinase family. Homododecamer.

It carries out the reaction 3-dehydroquinate = 3-dehydroshikimate + H2O. Its pathway is metabolic intermediate biosynthesis; chorismate biosynthesis; chorismate from D-erythrose 4-phosphate and phosphoenolpyruvate: step 3/7. Catalyzes a trans-dehydration via an enolate intermediate. The chain is 3-dehydroquinate dehydratase 1 (aroQ1) from Corynebacterium efficiens (strain DSM 44549 / YS-314 / AJ 12310 / JCM 11189 / NBRC 100395).